Reading from the N-terminus, the 241-residue chain is Probable transcriptional regulatory protein NE0210 (241 aa).

The protein belongs to the TACO1 family.

It localises to the cytoplasm. The chain is Probable transcriptional regulatory protein NE0210 from Nitrosomonas europaea (strain ATCC 19718 / CIP 103999 / KCTC 2705 / NBRC 14298).